The chain runs to 188 residues: Probable manganese efflux pump MntP (188 aa).

Helical transmembrane passes span 3-23 (ITAT…ASIG), 66-86 (LEWN…RMII), 106-128 (WLLV…GLAF), 143-163 (ATLI…SIIG), and 168-188 (ILGG…HFHG).

It belongs to the MntP (TC 9.B.29) family.

The protein resides in the cell inner membrane. Its function is as follows. Probably functions as a manganese efflux pump. The polypeptide is Probable manganese efflux pump MntP (Escherichia coli O7:K1 (strain IAI39 / ExPEC)).